A 535-amino-acid polypeptide reads, in one-letter code: CTP synthase (535 aa).

The segment at 1–267 (MTKYIFVTGG…DSLVCSHLKL (267 aa)) is amidoligase domain. Ser13 contacts CTP. Ser13 contacts UTP. Position 14–19 (14–19 (SLGKGI)) interacts with ATP. Residue Tyr54 participates in L-glutamine binding. Asp71 lines the ATP pocket. The Mg(2+) site is built by Asp71 and Glu141. CTP contacts are provided by residues 148–150 (DIE), 188–193 (KTKPTQ), and Lys224. Residues 188–193 (KTKPTQ) and Lys224 each bind UTP. One can recognise a Glutamine amidotransferase type-1 domain in the interval 292–534 (TIALVGKYVE…VHASLKTSEK (243 aa)). Gly354 serves as a coordination point for L-glutamine. Cys381 acts as the Nucleophile; for glutamine hydrolysis in catalysis. L-glutamine is bound by residues 382–385 (LGMQ), Glu405, and Arg462. Residues His507 and Glu509 contribute to the active site.

It belongs to the CTP synthase family. As to quaternary structure, homotetramer.

It carries out the reaction UTP + L-glutamine + ATP + H2O = CTP + L-glutamate + ADP + phosphate + 2 H(+). It catalyses the reaction L-glutamine + H2O = L-glutamate + NH4(+). The enzyme catalyses UTP + NH4(+) + ATP = CTP + ADP + phosphate + 2 H(+). The protein operates within pyrimidine metabolism; CTP biosynthesis via de novo pathway; CTP from UDP: step 2/2. Its activity is regulated as follows. Allosterically activated by GTP, when glutamine is the substrate; GTP has no effect on the reaction when ammonia is the substrate. The allosteric effector GTP functions by stabilizing the protein conformation that binds the tetrahedral intermediate(s) formed during glutamine hydrolysis. Inhibited by the product CTP, via allosteric rather than competitive inhibition. Its function is as follows. Catalyzes the ATP-dependent amination of UTP to CTP with either L-glutamine or ammonia as the source of nitrogen. Regulates intracellular CTP levels through interactions with the four ribonucleotide triphosphates. The sequence is that of CTP synthase from Bacillus licheniformis (strain ATCC 14580 / DSM 13 / JCM 2505 / CCUG 7422 / NBRC 12200 / NCIMB 9375 / NCTC 10341 / NRRL NRS-1264 / Gibson 46).